The following is a 2448-amino-acid chain: Cysteine repeat modular protein 1 (2448 aa).

The helical transmembrane segment at 9-29 threads the bilayer; that stretch reads TSTNLLNIFALYFSAICFIYC. N-linked (GlcNAc...) asparagine glycans are attached at residues Asn48, Asn89, Asn248, Asn284, Asn461, Asn503, Asn542, Asn598, and Asn619. FU repeat units lie at residues 431-481, 485-530, 535-566, and 567-611; these read KNTC…GYYF, FMQC…GFYI, NFKCEKCNASCLSCTGPSFDQCLSCKSGFYLS, and SNTC…GQFA. FU repeat units lie at residues 645–694, 698–727, 728–772, 775–813, 819–868, 904–947, 950–983, 984–1027, 1063–1109, and 1113–1144; these read NNQC…GYFP, TSVCQACQGKCKTCTSSNTCSSCINGYYLQ, DSNC…GTFG, QNICQTCIDGCQTCYGPTLLECYSCEQGFFFQAFQITNN, KGMC…YYLS, GRVC…GFPD, QNVCVACHPTCVTCQGPLATDCLTCISGYYLNPA, NNIC…RTYP, QGAC…NQYV, and QNRCLPCFYSCSSCFGPNSNQCFSCQPNGFYL. N-linked (GlcNAc...) asparagine glycosylation is found at Asn761 and Asn812. Asn934 is a glycosylation site (N-linked (GlcNAc...) asparagine). Residue Asn1002 is glycosylated (N-linked (GlcNAc...) asparagine). N-linked (GlcNAc...) asparagine glycosylation occurs at Asn1146. An FU 15 repeat occupies 1147-1193; it reads QTQCSICDISCLQCSGPGFDSCIQCAQGYYKLGDSVCVQSCPDGFFL. The N-linked (GlcNAc...) asparagine glycan is linked to Asn1194. FU repeat units follow at residues 1197–1232, 1234–1279, 1281–1332, 1346–1394, and 1402–1436; these read NNQCQSCNQVCFNCNGPQNSDCTSCAAGYYQSISNQ, GIIC…GYRS, KGVC…GTFQ, SYYC…GFIL, and NQYCKVCKINCVSCIQQFFYYQENCYSSCPVGTVQ. Asn1296, Asn1328, and Asn1365 each carry an N-linked (GlcNAc...) asparagine glycan. Residues Asn1506, Asn1601, Asn1628, and Asn1670 are each glycosylated (N-linked (GlcNAc...) asparagine). Residues 1739–1773 enclose the EGF-like domain; that stretch reads SDISCSLNLCMNSGKCVPNSIFCSCPSAFTGPKCQ. Disulfide bonds link Cys1743-Cys1754, Cys1748-Cys1761, and Cys1763-Cys1772. Asn1800, Asn1849, Asn1877, Asn1942, Asn2117, Asn2155, and Asn2179 each carry an N-linked (GlcNAc...) asparagine glycan. 2 consecutive transmembrane segments (helical) span residues 2201–2221 and 2238–2258; these read LYIMIIISLGIGAAFLGYSAI and IYFLYYFPIISFLVGPTNQFV. N-linked (GlcNAc...) asparagine glycosylation occurs at Asn2260. 4 consecutive transmembrane segments (helical) span residues 2267 to 2287, 2296 to 2316, 2352 to 2372, and 2386 to 2406; these read SLTIIASHFAFSSIYVQILPF, ILTSIITVSSTSVCIYWTIGV, MIGLVLAVLALISISVFIGLC, and AVFLIDLIADAIVVFILIIVG.

It localises to the membrane. Its function is as follows. Required for mucocyst secretion. In Tetrahymena thermophila (strain SB210), this protein is Cysteine repeat modular protein 1.